The chain runs to 335 residues: Nucleoid-associated protein KPN78578_25800 (335 aa).

Belongs to the YejK family.

Its subcellular location is the cytoplasm. It is found in the nucleoid. In Klebsiella pneumoniae subsp. pneumoniae (strain ATCC 700721 / MGH 78578), this protein is Nucleoid-associated protein KPN78578_25800.